The primary structure comprises 327 residues: Phenylalanine--tRNA ligase alpha subunit (327 aa).

Position 252 (Glu-252) interacts with Mg(2+).

The protein belongs to the class-II aminoacyl-tRNA synthetase family. Phe-tRNA synthetase alpha subunit type 1 subfamily. In terms of assembly, tetramer of two alpha and two beta subunits. Mg(2+) is required as a cofactor.

Its subcellular location is the cytoplasm. The catalysed reaction is tRNA(Phe) + L-phenylalanine + ATP = L-phenylalanyl-tRNA(Phe) + AMP + diphosphate + H(+). In Aliivibrio fischeri (strain ATCC 700601 / ES114) (Vibrio fischeri), this protein is Phenylalanine--tRNA ligase alpha subunit.